The chain runs to 260 residues: Vaa serine proteinase homolog 1 (260 aa).

The N-terminal stretch at 1 to 18 (MVLIRVLANLLVLQLSYA) is a signal peptide. The propeptide occupies 19–24 (QKSSEL). One can recognise a Peptidase S1 domain in the interval 25-251 (VIGGDECNIN…YTDWIQSIIA (227 aa)). 6 disulfide bridges follow: C31-C165, C52-C68, C100-C258, C144-C212, C176-C191, and C202-C227. A glycan (N-linked (GlcNAc...) asparagine) is linked at N123. Residues 172 to 186 (DYSVCQKVYRKLPEK) are key residues for binding to FVIIIa. The N-linked (GlcNAc...) asparagine glycan is linked to N253.

Belongs to the peptidase S1 family. Snake venom subfamily. In terms of processing, N-glycosylated. The toxin exists in multiple glycoforms. As to expression, expressed by the venom gland.

Its subcellular location is the secreted. In terms of biological role, this is the first member of the serine protease family that has strong anticoagulant activity and lacks enzymatic activity. It inhibits activities of three blood coagulation complexes: (1) prothrombinase complex (composed of blood coagulation factors Va and Xa (F5 and F10)) (IC(50)=164.1 nM), (2) intrinsic tenase complex (composed of factors VIIIa and IXa (F8 and F9)), and (3) extrinsic tenase complex (composed of tissue factor and factor VIIa (F7)). The toxin also has been observed to bind prothrombin, factor FVa, non-activated and activated forms of factors FVII (F7) (FVII and FVIIa), factor FVIIIa (F8), factors FIX and FIXa (F9) and factors FX and FXa (F10). The toxin inhibits the activity of the intrinsic tenase complex mainly by competing with FIXa (F9) for binding to FVIIIa (F8). This Vipera ammodytes ammodytes (Western sand viper) protein is Vaa serine proteinase homolog 1.